We begin with the raw amino-acid sequence, 177 residues long: Large ribosomal subunit protein uL6 (177 aa).

This sequence belongs to the universal ribosomal protein uL6 family. Part of the 50S ribosomal subunit.

Functionally, this protein binds to the 23S rRNA, and is important in its secondary structure. It is located near the subunit interface in the base of the L7/L12 stalk, and near the tRNA binding site of the peptidyltransferase center. The protein is Large ribosomal subunit protein uL6 of Micrococcus luteus (strain ATCC 4698 / DSM 20030 / JCM 1464 / CCM 169 / CCUG 5858 / IAM 1056 / NBRC 3333 / NCIMB 9278 / NCTC 2665 / VKM Ac-2230) (Micrococcus lysodeikticus).